We begin with the raw amino-acid sequence, 426 residues long: Chaperone SurA (426 aa).

Positions 1–13 are cleaved as a signal peptide; that stretch reads MLGALFLGTAANA. PpiC domains are found at residues 164 to 265 and 274 to 373; these read SEEL…KLLE and RDEV…EVLG.

The protein localises to the periplasm. The catalysed reaction is [protein]-peptidylproline (omega=180) = [protein]-peptidylproline (omega=0). Chaperone involved in the correct folding and assembly of outer membrane proteins. Recognizes specific patterns of aromatic residues and the orientation of their side chains, which are found more frequently in integral outer membrane proteins. May act in both early periplasmic and late outer membrane-associated steps of protein maturation. This Pseudomonas fluorescens (strain Pf0-1) protein is Chaperone SurA.